The following is a 258-amino-acid chain: Tryptophan synthase alpha chain (258 aa).

Active-site proton acceptor residues include E50 and D61.

It belongs to the TrpA family. Tetramer of two alpha and two beta chains.

The enzyme catalyses (1S,2R)-1-C-(indol-3-yl)glycerol 3-phosphate + L-serine = D-glyceraldehyde 3-phosphate + L-tryptophan + H2O. The protein operates within amino-acid biosynthesis; L-tryptophan biosynthesis; L-tryptophan from chorismate: step 5/5. Its function is as follows. The alpha subunit is responsible for the aldol cleavage of indoleglycerol phosphate to indole and glyceraldehyde 3-phosphate. The sequence is that of Tryptophan synthase alpha chain from Clostridium beijerinckii (strain ATCC 51743 / NCIMB 8052) (Clostridium acetobutylicum).